Reading from the N-terminus, the 196-residue chain is RNA pyrophosphohydrolase (196 aa).

The Nudix hydrolase domain maps to 6 to 149 (GYRPNVGIVI…KRDVYRKVMK (144 aa)). A Nudix box motif is present at residues 38–59 (GGINDNESAEQAMYRELHEEVG).

This sequence belongs to the Nudix hydrolase family. RppH subfamily. Requires a divalent metal cation as cofactor.

Its function is as follows. Accelerates the degradation of transcripts by removing pyrophosphate from the 5'-end of triphosphorylated RNA, leading to a more labile monophosphorylated state that can stimulate subsequent ribonuclease cleavage. The chain is RNA pyrophosphohydrolase from Haemophilus influenzae (strain PittEE).